Here is a 220-residue protein sequence, read N- to C-terminus: Fructose-6-phosphate aldolase 1 (220 aa).

Lys85 (schiff-base intermediate with substrate) is an active-site residue.

This sequence belongs to the transaldolase family. Type 3A subfamily. In terms of assembly, homodecamer.

It is found in the cytoplasm. It catalyses the reaction beta-D-fructose 6-phosphate = dihydroxyacetone + D-glyceraldehyde 3-phosphate. Catalyzes the reversible formation of fructose 6-phosphate from dihydroxyacetone and D-glyceraldehyde 3-phosphate via an aldolization reaction. The sequence is that of Fructose-6-phosphate aldolase 1 (fsaA) from Escherichia coli O6:H1 (strain CFT073 / ATCC 700928 / UPEC).